A 484-amino-acid chain; its full sequence is MPAPTAVPPPHPLPPDGGWGWVVVGASFISIGFSYAFPKSVTVFFKDIQEIFRAGHSKVAWISSIMLAVMYAGGPISSVLVNKYGSRPVVVIGGLLCCTGMILASFSTSMIQLYLTIGFISGLGLAFNLQPALTILGKYFYRRRPLASGLAMTGSPVFLSSLAPFNQYLFNSYGLKGSFLILGGIFLHSCVAGSLMRPVGTSQQSPKSKSKVSSRHDSSTKKAPKLTLAQRINMFLDFSLFKHRGFLIYLSGNVIMFLGFFAPVIFLSPYAKNRGVDDYKAAYLLSVMAFVDMFSRPCGGLIANTRLVRPRIQYFFSLAIVFTGVCHLLCPLAESYTALVVYAIFFGYGFGSVSSILFETLMDLVGPARFSSAVGLVTIVECCPVLLGPPLAGKLVDETGEHKYLFVASGAIVVLAGIWLFIGNAINYRLLAKERKREKARKKKSPNRHSKELESLSKSNQDDVAVRVPQAHRSPSDKERESNI.

Topologically, residues 1–16 are cytoplasmic; sequence MPAPTAVPPPHPLPPD. Residues 17-37 traverse the membrane as a helical segment; sequence GGWGWVVVGASFISIGFSYAF. Over 38–60 the chain is Extracellular; sequence PKSVTVFFKDIQEIFRAGHSKVA. The helical transmembrane segment at 61–81 threads the bilayer; it reads WISSIMLAVMYAGGPISSVLV. Residues 82 to 87 lie on the Cytoplasmic side of the membrane; it reads NKYGSR. A helical transmembrane segment spans residues 88–108; it reads PVVVIGGLLCCTGMILASFST. Residues 109–116 are Extracellular-facing; it reads SMIQLYLT. The chain crosses the membrane as a helical span at residues 117–137; it reads IGFISGLGLAFNLQPALTILG. Residues 138-144 are Cytoplasmic-facing; the sequence is KYFYRRR. A helical transmembrane segment spans residues 145–165; that stretch reads PLASGLAMTGSPVFLSSLAPF. The Extracellular portion of the chain corresponds to 166–174; it reads NQYLFNSYG. Residues 175–195 traverse the membrane as a helical segment; sequence LKGSFLILGGIFLHSCVAGSL. The Cytoplasmic portion of the chain corresponds to 196–245; the sequence is MRPVGTSQQSPKSKSKVSSRHDSSTKKAPKLTLAQRINMFLDFSLFKHRG. The disordered stretch occupies residues 198–223; sequence PVGTSQQSPKSKSKVSSRHDSSTKKA. Residues 246-266 form a helical membrane-spanning segment; that stretch reads FLIYLSGNVIMFLGFFAPVIF. The Extracellular portion of the chain corresponds to 267–281; it reads LSPYAKNRGVDDYKA. A helical transmembrane segment spans residues 282–302; it reads AYLLSVMAFVDMFSRPCGGLI. The Cytoplasmic segment spans residues 303–311; sequence ANTRLVRPR. Residues 312 to 332 traverse the membrane as a helical segment; it reads IQYFFSLAIVFTGVCHLLCPL. Residues 333-337 are Extracellular-facing; the sequence is AESYT. The chain crosses the membrane as a helical span at residues 338-358; the sequence is ALVVYAIFFGYGFGSVSSILF. At 359 to 372 the chain is on the cytoplasmic side; sequence ETLMDLVGPARFSS. A helical transmembrane segment spans residues 373 to 393; it reads AVGLVTIVECCPVLLGPPLAG. Residues 394 to 405 are Extracellular-facing; it reads KLVDETGEHKYL. A helical transmembrane segment spans residues 406-426; it reads FVASGAIVVLAGIWLFIGNAI. The Cytoplasmic segment spans residues 427 to 484; the sequence is NYRLLAKERKREKARKKKSPNRHSKELESLSKSNQDDVAVRVPQAHRSPSDKERESNI. The segment at 437–484 is disordered; it reads REKARKKKSPNRHSKELESLSKSNQDDVAVRVPQAHRSPSDKERESNI. Basic residues predominate over residues 438–448; sequence EKARKKKSPNR. Basic and acidic residues-rich tracts occupy residues 449–465 and 474–484; these read HSKE…DDVA and SPSDKERESNI.

It belongs to the major facilitator superfamily. Monocarboxylate porter (TC 2.A.1.13) family. Homodimer. Interacts with GRID2IP. Interacts with EMB; interaction mediates SLC16A7 targeting to the plasma membrane. Interacts with isoform 2 of BSG.

The protein localises to the cell membrane. Its subcellular location is the basolateral cell membrane. It localises to the cytoplasm. The catalysed reaction is 3-methyl-2-oxobutanoate(out) + H(+)(out) = 3-methyl-2-oxobutanoate(in) + H(+)(in). It carries out the reaction (S)-lactate(in) + H(+)(in) = (S)-lactate(out) + H(+)(out). It catalyses the reaction acetoacetate(out) + H(+)(out) = acetoacetate(in) + H(+)(in). The enzyme catalyses (R)-3-hydroxybutanoate(out) + H(+)(out) = (R)-3-hydroxybutanoate(in) + H(+)(in). The catalysed reaction is 4-methyl-2-oxopentanoate(out) + H(+)(out) = 4-methyl-2-oxopentanoate(in) + H(+)(in). It carries out the reaction pyruvate(out) + H(+)(out) = pyruvate(in) + H(+)(in). It catalyses the reaction (S)-3-hydroxybutanoate(out) + H(+)(out) = (S)-3-hydroxybutanoate(in) + H(+)(in). With respect to regulation, transport activity exhibits steep dependence on substrate concentration. Substrate concentration sensitivity of SLC16A7 arises from the strong inter-subunit cooperativity of the SLC16A7 dimer during transport. Inhibited by AR-C155858. Its function is as follows. Proton-coupled monocarboxylate symporter. Catalyzes the rapid transport across the plasma membrane of monocarboxylates such as L-lactate, pyruvate and ketone bodies, acetoacetate, beta-hydroxybutyrate and acetate. Dimerization is functionally required and both subunits work cooperatively in transporting substrate. The sequence is that of Monocarboxylate transporter 2 (SLC16A7) from Meriones unguiculatus (Mongolian jird).